Reading from the N-terminus, the 313-residue chain is Glyoxylate/hydroxypyruvate reductase A (313 aa).

Arg-228 is a catalytic residue. Catalysis depends on His-276, which acts as the Proton donor.

This sequence belongs to the D-isomer specific 2-hydroxyacid dehydrogenase family. GhrA subfamily.

It is found in the cytoplasm. It carries out the reaction glycolate + NADP(+) = glyoxylate + NADPH + H(+). It catalyses the reaction (R)-glycerate + NAD(+) = 3-hydroxypyruvate + NADH + H(+). The enzyme catalyses (R)-glycerate + NADP(+) = 3-hydroxypyruvate + NADPH + H(+). In terms of biological role, catalyzes the NADPH-dependent reduction of glyoxylate and hydroxypyruvate into glycolate and glycerate, respectively. The polypeptide is Glyoxylate/hydroxypyruvate reductase A (Serratia proteamaculans (strain 568)).